Consider the following 191-residue polypeptide: Orotate phosphoribosyltransferase (191 aa).

114–122 (EDVVTTGKS) provides a ligand contact to 5-phospho-alpha-D-ribose 1-diphosphate. Residues threonine 118 and arginine 146 each contribute to the orotate site.

This sequence belongs to the purine/pyrimidine phosphoribosyltransferase family. PyrE subfamily. Homodimer. It depends on Mg(2+) as a cofactor.

It carries out the reaction orotidine 5'-phosphate + diphosphate = orotate + 5-phospho-alpha-D-ribose 1-diphosphate. The protein operates within pyrimidine metabolism; UMP biosynthesis via de novo pathway; UMP from orotate: step 1/2. Functionally, catalyzes the transfer of a ribosyl phosphate group from 5-phosphoribose 1-diphosphate to orotate, leading to the formation of orotidine monophosphate (OMP). The sequence is that of Orotate phosphoribosyltransferase from Clostridium botulinum (strain Kyoto / Type A2).